The chain runs to 189 residues: 3-hydroxyanthranilate 3,4-dioxygenase (189 aa).

Arg-46 is a binding site for O2. His-50, Glu-56, and His-94 together coordinate Fe cation. Glu-56 is a binding site for substrate. Residues Arg-98 and Glu-109 each contribute to the substrate site. Residues Cys-124, Cys-127, Cys-161, and Cys-164 each contribute to the Fe cation site.

This sequence belongs to the 3-HAO family. As to quaternary structure, homodimer. Fe(2+) serves as cofactor.

It carries out the reaction 3-hydroxyanthranilate + O2 = (2Z,4Z)-2-amino-3-carboxymuconate 6-semialdehyde. The protein operates within cofactor biosynthesis; NAD(+) biosynthesis; quinolinate from L-kynurenine: step 3/3. In terms of biological role, catalyzes the oxidative ring opening of 3-hydroxyanthranilate to 2-amino-3-carboxymuconate semialdehyde, which spontaneously cyclizes to quinolinate. This is 3-hydroxyanthranilate 3,4-dioxygenase from Shewanella woodyi (strain ATCC 51908 / MS32).